The chain runs to 819 residues: Lon protease (819 aa).

The segment at 1–36 (MDSTTNSDSPILDPNPEDVEKLLDESEEESEDQSTE) is disordered. Residues 43 to 240 (LFILPLNKRP…KALILLKKEL (198 aa)) form the Lon N-terminal domain. 393–400 (GPPGVGKT) contributes to the ATP binding site. One can recognise a Lon proteolytic domain in the interval 635 to 817 (STPVGVATGL…DDVLKVAFPK (183 aa)). Active-site residues include Ser723 and Lys766.

Belongs to the peptidase S16 family. As to quaternary structure, homohexamer. Organized in a ring with a central cavity.

The protein resides in the cytoplasm. It carries out the reaction Hydrolysis of proteins in presence of ATP.. Functionally, ATP-dependent serine protease that mediates the selective degradation of mutant and abnormal proteins as well as certain short-lived regulatory proteins. Required for cellular homeostasis and for survival from DNA damage and developmental changes induced by stress. Degrades polypeptides processively to yield small peptide fragments that are 5 to 10 amino acids long. Binds to DNA in a double-stranded, site-specific manner. In Chlamydia pneumoniae (Chlamydophila pneumoniae), this protein is Lon protease.